Here is a 132-residue protein sequence, read N- to C-terminus: Large ribosomal subunit protein uL14 (132 aa).

It belongs to the universal ribosomal protein uL14 family. As to quaternary structure, part of the 50S ribosomal subunit. Forms a cluster with proteins L3 and L24e, part of which may contact the 16S rRNA in 2 intersubunit bridges.

Functionally, binds to 23S rRNA. Forms part of two intersubunit bridges in the 70S ribosome. This is Large ribosomal subunit protein uL14 from Methanococcus aeolicus (strain ATCC BAA-1280 / DSM 17508 / OCM 812 / Nankai-3).